The sequence spans 190 residues: Signal peptidase I W (190 aa).

A helical membrane pass occupies residues 4–24; it reads ISNILYVIIFTLIIVLTLVVI. Residue serine 45 is part of the active site. A helical membrane pass occupies residues 143–163; the sequence is PIGTAVLLIVPGVMLLVYAFV.

It belongs to the peptidase S26B family.

Its subcellular location is the cell membrane. The enzyme catalyses Cleavage of hydrophobic, N-terminal signal or leader sequences from secreted and periplasmic proteins.. Its function is as follows. Required for the cleavage of the signal sequence of TasA and TapA, which are involved in biofilm formation. This is Signal peptidase I W from Bacillus subtilis (strain 168).